The primary structure comprises 93 residues: Integration host factor subunit beta (93 aa).

Belongs to the bacterial histone-like protein family. Heterodimer of an alpha and a beta chain.

Functionally, this protein is one of the two subunits of integration host factor, a specific DNA-binding protein that functions in genetic recombination as well as in transcriptional and translational control. This Aliivibrio salmonicida (strain LFI1238) (Vibrio salmonicida (strain LFI1238)) protein is Integration host factor subunit beta.